The sequence spans 568 residues: Potassium-transporting ATPase potassium-binding subunit (568 aa).

Transmembrane regions (helical) follow at residues 3 to 23, 64 to 84, 133 to 153, 179 to 199, 255 to 275, 281 to 301, 375 to 395, 418 to 438, 497 to 517, and 535 to 555; these read TEIL…YPLG, FLKA…VLLV, FVIM…MAGV, ILLP…TPMG, MVEC…LGFY, LGYS…FINV, FGGV…AVFI, IATF…AISS, IVLI…AGLL, and VTFA…SFFP.

It belongs to the KdpA family. As to quaternary structure, the system is composed of three essential subunits: KdpA, KdpB and KdpC.

It is found in the cell inner membrane. Its function is as follows. Part of the high-affinity ATP-driven potassium transport (or Kdp) system, which catalyzes the hydrolysis of ATP coupled with the electrogenic transport of potassium into the cytoplasm. This subunit binds the periplasmic potassium ions and delivers the ions to the membrane domain of KdpB through an intramembrane tunnel. The chain is Potassium-transporting ATPase potassium-binding subunit from Bacteroides fragilis (strain ATCC 25285 / DSM 2151 / CCUG 4856 / JCM 11019 / LMG 10263 / NCTC 9343 / Onslow / VPI 2553 / EN-2).